Consider the following 227-residue polypeptide: Cytochrome c oxidase subunit 2 (227 aa).

The Mitochondrial intermembrane segment spans residues 1 to 14; that stretch reads MAYPFQLGLQDATS. Residues 15-45 traverse the membrane as a helical segment; that stretch reads PIMEELLHFHDHTLMIVFLISSLVLYIISLM. Topologically, residues 46-59 are mitochondrial matrix; that stretch reads LTTKLTHTSTMDAQ. A helical transmembrane segment spans residues 60–87; the sequence is EVETVWTILPAIILVLIALPSLRILYMM. Residues 88–227 are Mitochondrial intermembrane-facing; the sequence is DEINNPSLTV…YFETWSALMV (140 aa). Residues H161, C196, E198, C200, H204, and M207 each coordinate Cu cation. E198 is a binding site for Mg(2+). Position 218 is a phosphotyrosine (Y218).

Belongs to the cytochrome c oxidase subunit 2 family. As to quaternary structure, component of the cytochrome c oxidase (complex IV, CIV), a multisubunit enzyme composed of 14 subunits. The complex is composed of a catalytic core of 3 subunits MT-CO1, MT-CO2 and MT-CO3, encoded in the mitochondrial DNA, and 11 supernumerary subunits COX4I, COX5A, COX5B, COX6A, COX6B, COX6C, COX7A, COX7B, COX7C, COX8 and NDUFA4, which are encoded in the nuclear genome. The complex exists as a monomer or a dimer and forms supercomplexes (SCs) in the inner mitochondrial membrane with NADH-ubiquinone oxidoreductase (complex I, CI) and ubiquinol-cytochrome c oxidoreductase (cytochrome b-c1 complex, complex III, CIII), resulting in different assemblies (supercomplex SCI(1)III(2)IV(1) and megacomplex MCI(2)III(2)IV(2)). Found in a complex with TMEM177, COA6, COX18, COX20, SCO1 and SCO2. Interacts with TMEM177 in a COX20-dependent manner. Interacts with COX20. Interacts with COX16. It depends on Cu cation as a cofactor.

It is found in the mitochondrion inner membrane. It catalyses the reaction 4 Fe(II)-[cytochrome c] + O2 + 8 H(+)(in) = 4 Fe(III)-[cytochrome c] + 2 H2O + 4 H(+)(out). Its function is as follows. Component of the cytochrome c oxidase, the last enzyme in the mitochondrial electron transport chain which drives oxidative phosphorylation. The respiratory chain contains 3 multisubunit complexes succinate dehydrogenase (complex II, CII), ubiquinol-cytochrome c oxidoreductase (cytochrome b-c1 complex, complex III, CIII) and cytochrome c oxidase (complex IV, CIV), that cooperate to transfer electrons derived from NADH and succinate to molecular oxygen, creating an electrochemical gradient over the inner membrane that drives transmembrane transport and the ATP synthase. Cytochrome c oxidase is the component of the respiratory chain that catalyzes the reduction of oxygen to water. Electrons originating from reduced cytochrome c in the intermembrane space (IMS) are transferred via the dinuclear copper A center (CU(A)) of subunit 2 and heme A of subunit 1 to the active site in subunit 1, a binuclear center (BNC) formed by heme A3 and copper B (CU(B)). The BNC reduces molecular oxygen to 2 water molecules using 4 electrons from cytochrome c in the IMS and 4 protons from the mitochondrial matrix. The chain is Cytochrome c oxidase subunit 2 (MT-CO2) from Cerdocyon thous (Crab-eating fox).